A 1519-amino-acid chain; its full sequence is Putative lipoprotein YghJ (1519 aa).

The first 23 residues, 1-23 (MNKKFKYKKSLLAAILSATLLAG), serve as a signal peptide directing secretion. Disordered regions lie at residues 22-107 (AGCD…GATC) and 226-247 (NAATDKAPSTHTSPVVPVTTPG). A lipid anchor (N-palmitoyl cysteine) is attached at C24. C24 carries the S-diacylglycerol cysteine lipid modification. Residues 31–42 (SSSDTPPVDSGT) are compositionally biased toward low complexity. A compositionally biased stretch (pro residues) spans 51 to 77 (DPTPNPEPTPEPTPDPEPTPEPIPDPE). The segment covering 97–107 (GGSQRVTGATC) has biased composition (polar residues). Residues 234–247 (STHTSPVVPVTTPG) show a composition bias toward low complexity. The Peptidase M60 domain maps to 1080–1380 (GNMQSTGLWA…MYAQLKEWAE (301 aa)). The disordered stretch occupies residues 1497–1519 (DLPKPEQGPETINQVTEHKMSAE).

This sequence to V.cholerae AcfD (VC_0845).

The protein localises to the cell membrane. Functionally, may be a substrate of the type II secretion system beta (T2SS-beta). The protein is Putative lipoprotein YghJ (yghJ) of Escherichia coli O78:H11 (strain H10407 / ETEC).